Consider the following 176-residue polypeptide: Inner membrane-spanning protein YciB (176 aa).

Transmembrane regions (helical) follow at residues 24-44 (TATA…AFRH), 49-69 (PMLW…LVLH), 76-96 (WKPT…QLAF), 119-139 (LNVV…FVAY), and 149-169 (FKLF…SLWL).

Belongs to the YciB family.

It is found in the cell inner membrane. Plays a role in cell envelope biogenesis, maintenance of cell envelope integrity and membrane homeostasis. This chain is Inner membrane-spanning protein YciB, found in Paraburkholderia xenovorans (strain LB400).